The following is a 446-amino-acid chain: Ribosomal protein uS12 methylthiotransferase RimO (446 aa).

The 116-residue stretch at 4–119 folds into the MTTase N-terminal domain; it reads YKVGMVSLGC…IDKVIKEFIE (116 aa). The [4Fe-4S] cluster site is built by Cys13, Cys48, Cys82, Cys157, Cys161, and Cys164. A Radical SAM core domain is found at 143–373; the sequence is TTQKESAYIR…MLSQEKISND (231 aa). The TRAM domain occupies 376 to 442; it reads KLKVNKKYDI…DYDLIGVVED (67 aa).

Belongs to the methylthiotransferase family. RimO subfamily. [4Fe-4S] cluster serves as cofactor.

It localises to the cytoplasm. It carries out the reaction L-aspartate(89)-[ribosomal protein uS12]-hydrogen + (sulfur carrier)-SH + AH2 + 2 S-adenosyl-L-methionine = 3-methylsulfanyl-L-aspartate(89)-[ribosomal protein uS12]-hydrogen + (sulfur carrier)-H + 5'-deoxyadenosine + L-methionine + A + S-adenosyl-L-homocysteine + 2 H(+). Its function is as follows. Catalyzes the methylthiolation of an aspartic acid residue of ribosomal protein uS12. The polypeptide is Ribosomal protein uS12 methylthiotransferase RimO (Clostridium botulinum (strain Eklund 17B / Type B)).